Consider the following 238-residue polypeptide: 7-cyano-7-deazaguanine synthase 1 (238 aa).

Residue Phe-14–Leu-24 coordinates ATP. Residues Cys-202, Cys-217, Cys-220, and Cys-223 each contribute to the Zn(2+) site.

This sequence belongs to the QueC family. Requires Zn(2+) as cofactor.

The enzyme catalyses 7-carboxy-7-deazaguanine + NH4(+) + ATP = 7-cyano-7-deazaguanine + ADP + phosphate + H2O + H(+). Its pathway is purine metabolism; 7-cyano-7-deazaguanine biosynthesis. Its function is as follows. Catalyzes the ATP-dependent conversion of 7-carboxy-7-deazaguanine (CDG) to 7-cyano-7-deazaguanine (preQ(0)). This chain is 7-cyano-7-deazaguanine synthase 1, found in Rhodopseudomonas palustris (strain HaA2).